The sequence spans 158 residues: UPF0260 protein RHE_CH01262 (158 aa).

It belongs to the UPF0260 family.

The polypeptide is UPF0260 protein RHE_CH01262 (Rhizobium etli (strain ATCC 51251 / DSM 11541 / JCM 21823 / NBRC 15573 / CFN 42)).